The primary structure comprises 240 residues: Ribonuclease PH (240 aa).

Residues Arg-86 and 124–126 (GTR) each bind phosphate.

Belongs to the RNase PH family. As to quaternary structure, homohexameric ring arranged as a trimer of dimers.

The catalysed reaction is tRNA(n+1) + phosphate = tRNA(n) + a ribonucleoside 5'-diphosphate. Phosphorolytic 3'-5' exoribonuclease that plays an important role in tRNA 3'-end maturation. Removes nucleotide residues following the 3'-CCA terminus of tRNAs; can also add nucleotides to the ends of RNA molecules by using nucleoside diphosphates as substrates, but this may not be physiologically important. Probably plays a role in initiation of 16S rRNA degradation (leading to ribosome degradation) during starvation. The sequence is that of Ribonuclease PH from Mannheimia succiniciproducens (strain KCTC 0769BP / MBEL55E).